We begin with the raw amino-acid sequence, 212 residues long: TATA-box-binding protein 2 (212 aa).

2 tandem repeats follow at residues 30–114 (THPE…KKIG) and 120–201 (SNFN…YPIL).

This sequence belongs to the TBP family. As to quaternary structure, belongs to the TFIID complex together with the TBP-associated factors (TAFs). Binds DNA as monomer.

It is found in the nucleus. General transcription factor that functions at the core of the DNA-binding multiprotein factor TFIID. Binding of TFIID to the TATA box is the initial transcriptional step of the pre-initiation complex (PIC), playing a role in the activation of eukaryotic genes transcribed by RNA polymerase II. The protein is TATA-box-binding protein 2 of Entamoeba histolytica (strain ATCC 30459 / HM-1:IMSS / ABRM).